Consider the following 100-residue polypeptide: MIFGYINKLSILNVNPFSKASQSAKLLLAVASKETSNSLYGLNLITSLASKDTNSKPSVEVVYKDGKKLTVDPTKMNIGRLTELIDDYSKTLKFKEMMQK.

It belongs to the mitochondrion-specific ribosomal protein mL53 family. Component of the mitochondrial large ribosomal subunit (mt-LSU). Mature yeast 74S mitochondrial ribosomes consist of a small (37S) and a large (54S) subunit. The 37S small subunit contains a 15S ribosomal RNA (15S mt-rRNA) and at least 32 different proteins. The 54S large subunit contains a 21S rRNA (21S mt-rRNA) and at least 45 different proteins.

The protein localises to the mitochondrion. Functionally, component of the mitochondrial ribosome (mitoribosome), a dedicated translation machinery responsible for the synthesis of mitochondrial genome-encoded proteins, including at least some of the essential transmembrane subunits of the mitochondrial respiratory chain. The mitoribosomes are attached to the mitochondrial inner membrane and translation products are cotranslationally integrated into the membrane. The polypeptide is Large ribosomal subunit protein mL53 (mrpl44) (Schizosaccharomyces pombe (strain 972 / ATCC 24843) (Fission yeast)).